The primary structure comprises 616 residues: Dihydroxy-acid dehydratase (616 aa).

Mg(2+) is bound at residue Asp-81. Cys-122 contributes to the [2Fe-2S] cluster binding site. Asp-123 and Lys-124 together coordinate Mg(2+). Lys-124 carries the post-translational modification N6-carboxylysine. A [2Fe-2S] cluster-binding site is contributed by Cys-195. Glu-491 lines the Mg(2+) pocket. The active-site Proton acceptor is Ser-517.

Belongs to the IlvD/Edd family. As to quaternary structure, homodimer. [2Fe-2S] cluster is required as a cofactor. Mg(2+) serves as cofactor.

The catalysed reaction is (2R)-2,3-dihydroxy-3-methylbutanoate = 3-methyl-2-oxobutanoate + H2O. The enzyme catalyses (2R,3R)-2,3-dihydroxy-3-methylpentanoate = (S)-3-methyl-2-oxopentanoate + H2O. It participates in amino-acid biosynthesis; L-isoleucine biosynthesis; L-isoleucine from 2-oxobutanoate: step 3/4. It functions in the pathway amino-acid biosynthesis; L-valine biosynthesis; L-valine from pyruvate: step 3/4. Its function is as follows. Functions in the biosynthesis of branched-chain amino acids. Catalyzes the dehydration of (2R,3R)-2,3-dihydroxy-3-methylpentanoate (2,3-dihydroxy-3-methylvalerate) into 2-oxo-3-methylpentanoate (2-oxo-3-methylvalerate) and of (2R)-2,3-dihydroxy-3-methylbutanoate (2,3-dihydroxyisovalerate) into 2-oxo-3-methylbutanoate (2-oxoisovalerate), the penultimate precursor to L-isoleucine and L-valine, respectively. This Salmonella dublin (strain CT_02021853) protein is Dihydroxy-acid dehydratase.